Here is a 53-residue protein sequence, read N- to C-terminus: uncharacterized protein (53 aa).

A helical transmembrane segment spans residues 4–24 (FILLIVGFIYGAGGVLLYSVY).

Its subcellular location is the host membrane. This is an uncharacterized protein from Acidianus bottle-shaped virus (isolate Italy/Pozzuoli) (ABV).